Consider the following 42-residue polypeptide: Large ribosomal subunit protein bL36 (42 aa).

Belongs to the bacterial ribosomal protein bL36 family.

The chain is Large ribosomal subunit protein bL36 from Wolbachia pipientis wMel.